Here is a 256-residue protein sequence, read N- to C-terminus: Trypsin, alkaline C (256 aa).

A signal peptide spans 1 to 17 (MRLFLALLALGFAAVAA). A propeptide spans 18–24 (VPANPQR) (activation peptide). A Peptidase S1 domain is found at 25 to 256 (IVGGSTTTIQ…RYTSWISNNS (232 aa)). Cysteines 55 and 71 form a disulfide. Active-site charge relay system residues include His70 and Asp115. 2 cysteine pairs are disulfide-bonded: Cys180–Cys197 and Cys209–Cys233. The active-site Charge relay system is the Ser213.

This sequence belongs to the peptidase S1 family. Midgut.

It is found in the secreted. The protein localises to the extracellular space. The catalysed reaction is Preferential cleavage: Arg-|-Xaa, Lys-|-Xaa.. The sequence is that of Trypsin, alkaline C from Manduca sexta (Tobacco hawkmoth).